Reading from the N-terminus, the 396-residue chain is Chalcone synthase (396 aa).

Cys169 is an active-site residue.

This sequence belongs to the thiolase-like superfamily. Chalcone/stilbene synthases family.

The enzyme catalyses (E)-4-coumaroyl-CoA + 3 malonyl-CoA + 3 H(+) = 2',4,4',6'-tetrahydroxychalcone + 3 CO2 + 4 CoA. Its pathway is secondary metabolite biosynthesis; flavonoid biosynthesis. The primary product of this enzyme is 4,2',4',6'-tetrahydroxychalcone (also termed naringenin-chalcone or chalcone) which can under specific conditions spontaneously isomerize into naringenin. The chain is Chalcone synthase (CHS) from Pinus sylvestris (Scotch pine).